The chain runs to 142 residues: Deoxyuridine 5'-triphosphate nucleotidohydrolase (142 aa).

Substrate-binding positions include 62–64 (RSG), N75, and 79–81 (TID).

It belongs to the dUTPase family. The cofactor is Mg(2+).

The catalysed reaction is dUTP + H2O = dUMP + diphosphate + H(+). It functions in the pathway pyrimidine metabolism; dUMP biosynthesis; dUMP from dCTP (dUTP route): step 2/2. This enzyme is involved in nucleotide metabolism: it produces dUMP, the immediate precursor of thymidine nucleotides and it decreases the intracellular concentration of dUTP so that uracil cannot be incorporated into DNA. In Picosynechococcus sp. (strain ATCC 27264 / PCC 7002 / PR-6) (Agmenellum quadruplicatum), this protein is Deoxyuridine 5'-triphosphate nucleotidohydrolase.